The following is a 515-amino-acid chain: Iroquois-class homeodomain protein IRX-4 (515 aa).

Positions 144–205 (GTRRKNATRE…NARRRLKKEN (62 aa)) form a DNA-binding region, homeobox; TALE-type. 3 disordered regions span residues 205-258 (NKMT…ELEL), 278-307 (TPFQSLDSGPERIPASSDGPGTGKEASTTL), and 398-425 (GPTGVSATTPASSPAVTAPSGALDRHQD). Residues 214–223 (KCADEKRPYG) show a composition bias toward basic and acidic residues. A compositionally biased stretch (acidic residues) spans 224-236 (EGEEEEAGEEESR). Basic and acidic residues predominate over residues 237–257 (EEPLKSAKSEGHAGKDDKELE). A compositionally biased stretch (low complexity) spans 399–419 (PTGVSATTPASSPAVTAPSGA).

Belongs to the TALE/IRO homeobox family. Interacts with the vitamin D receptor VDR but doesn't affect its transactivation activity. Expressed in the developing central nervous system, skin, and vibrissae, but predominantly expressed in the cardiac ventricles of the developing heart. Not expressed in the developing metanephric kidney or adult kidney.

The protein localises to the nucleus. Likely to be an important mediator of ventricular differentiation during cardiac development. The chain is Iroquois-class homeodomain protein IRX-4 (Irx4) from Mus musculus (Mouse).